The sequence spans 258 residues: Small ribosomal subunit protein uS2 (258 aa).

This sequence belongs to the universal ribosomal protein uS2 family.

The chain is Small ribosomal subunit protein uS2 from Granulibacter bethesdensis (strain ATCC BAA-1260 / CGDNIH1).